The sequence spans 522 residues: Protein nucleotidyltransferase YdiU (522 aa).

ATP is bound by residues Gly-109, Gly-111, Arg-112, Lys-132, Asp-144, Gly-145, Arg-195, and Arg-202. Asp-271 acts as the Proton acceptor in catalysis. Residues Asn-272 and Asp-281 each contribute to the Mg(2+) site. Asp-281 is a binding site for ATP.

This sequence belongs to the SELO family. Mg(2+) serves as cofactor. The cofactor is Mn(2+).

It catalyses the reaction L-seryl-[protein] + ATP = 3-O-(5'-adenylyl)-L-seryl-[protein] + diphosphate. The catalysed reaction is L-threonyl-[protein] + ATP = 3-O-(5'-adenylyl)-L-threonyl-[protein] + diphosphate. The enzyme catalyses L-tyrosyl-[protein] + ATP = O-(5'-adenylyl)-L-tyrosyl-[protein] + diphosphate. It carries out the reaction L-histidyl-[protein] + UTP = N(tele)-(5'-uridylyl)-L-histidyl-[protein] + diphosphate. It catalyses the reaction L-seryl-[protein] + UTP = O-(5'-uridylyl)-L-seryl-[protein] + diphosphate. The catalysed reaction is L-tyrosyl-[protein] + UTP = O-(5'-uridylyl)-L-tyrosyl-[protein] + diphosphate. Nucleotidyltransferase involved in the post-translational modification of proteins. It can catalyze the addition of adenosine monophosphate (AMP) or uridine monophosphate (UMP) to a protein, resulting in modifications known as AMPylation and UMPylation. The polypeptide is Protein nucleotidyltransferase YdiU (Burkholderia orbicola (strain MC0-3)).